The primary structure comprises 237 residues: CDP-diacylglycerol--serine O-phosphatidyltransferase (237 aa).

The next 8 helical transmembrane spans lie at 3 to 23 (INPL…LGMM), 25 to 45 (IFYA…ASLI), 73 to 93 (VIAF…YNFG), 95 to 115 (IGMA…ARFN), 124 to 144 (YSFI…CVLL), 150 to 170 (FLEG…GVLM), 184 to 204 (WNLK…VRPL), and 207 to 227 (LSVF…FLMV).

Belongs to the CDP-alcohol phosphatidyltransferase class-I family.

The protein localises to the cell membrane. It catalyses the reaction a CDP-1,2-diacyl-sn-glycerol + L-serine = a 1,2-diacyl-sn-glycero-3-phospho-L-serine + CMP + H(+). The sequence is that of CDP-diacylglycerol--serine O-phosphatidyltransferase (pssA) from Helicobacter pylori (strain ATCC 700392 / 26695) (Campylobacter pylori).